The following is a 694-amino-acid chain: MSGGEVVCSGWLRKSPPEKKLKRYAWKRRWFVLRSGRLTGDPDVLEYYKNDHAKKPIRIIDLNLCQQVDAGLTFNKKEFENSYIFDINTIDRIFYLVADSEEEMNKWVRCICDICGFNPTEEDPVKAPGSSLQAPADIPLAISTAPPSSQVGASAAAAPPPYQLISLPPHLETLGIQEDPQDYLLLINCQSKKPEPTRTHADSAKSTSSETDCNDNVPSHKNPASSQSKHGVNGFFQQHMMYDSPPSRAASLSVDSSLYNLPRSYSHDVLPKVSPSSTEADGELYVFNTPSGTSSVEPQMRHVSISYDIPPTPGNTYQIPRTFPEGTLGQTSKLDTIPDIPPPRPPKPHPAHDRSPVDTCSITRTASDTDSSYCIPTAGLPPSRSNTISTVDLNKLRKDASSQDCYDTPRTFPSDRSSSLEGFHNHFKIKNILTAGSVSSEELDENYVPMNPNSPPRQHSSSFTEPIQEANYVPMTPGTFDFSSFGMQVPPPAHMGFRSSPKTPPRRPVPVADCEPPPVDRNLKPDRKVKPAPLEIKPLPEWEELQAPVRSPITRSFARDSSRFPLSPRPDSVHSTTSSSDSHDSEENYVPMNPNLSSEDSNLFGSNSLDGGNSPMIKPKGDKQVEYLDLDLDSGKSTPPRKQKSSGSGSSVADERVDYVVVDQQKTLALKSTREAWTDGRQSTESETPAKNVK.

Ser-2 carries the post-translational modification N-acetylserine. The PH domain occupies 5–116; it reads EVVCSGWLRK…WVRCICDICG (112 aa). Residues 194 to 203 show a composition bias toward basic and acidic residues; it reads PEPTRTHADS. The segment at 194-231 is disordered; it reads PEPTRTHADSAKSTSSETDCNDNVPSHKNPASSQSKHG. Over residues 204 to 230 the composition is skewed to polar residues; that stretch reads AKSTSSETDCNDNVPSHKNPASSQSKH. Ser-251, Ser-253, Ser-266, and Ser-304 each carry phosphoserine. Positions 309–378 are disordered; it reads IPPTPGNTYQ…TDSSYCIPTA (70 aa). Positions 358-374 are enriched in polar residues; it reads DTCSITRTASDTDSSYC. A Phosphothreonine modification is found at Thr-387. Residues Ser-402 and Ser-454 each carry the phosphoserine modification. Disordered regions lie at residues 492-532 and 560-656; these read PAHM…VKPA and DSSR…ADER. A compositionally biased stretch (polar residues) spans 594–611; sequence PNLSSEDSNLFGSNSLDG. A Phosphotyrosine modification is found at Tyr-627. The residue at position 638 (Thr-638) is a Phosphothreonine. Position 651 is a phosphoserine (Ser-651). Phosphotyrosine is present on Tyr-659. The segment at 668 to 694 is disordered; the sequence is LALKSTREAWTDGRQSTESETPAKNVK. Positions 672–684 are enriched in basic and acidic residues; that stretch reads STREAWTDGRQST. Ser-683 bears the Phosphoserine mark. The span at 685-694 shows a compositional bias: polar residues; the sequence is ESETPAKNVK.

This sequence belongs to the GAB family. Identified in a complex containing FRS2, GRB2, GAB1, PIK3R1 and SOS1. Forms a tripartite complex containing GAB1, METTL13 and SPRY2. Within the complex interacts with METTL13. Interacts with GRB2 and with other SH2-containing proteins. Interacts with phosphorylated LAT2. Interacts with PTPRJ. Interacts (phosphorylated) with PTPN11. Interacts with HCK. In terms of processing, phosphorylated in response to FGFR1 activation. Phosphorylated on tyrosine residue(s) by the epidermal growth factor receptor (EGFR) and the insulin receptor (INSR). Tyrosine phosphorylation of GAB1 mediates interaction with several proteins that contain SH2 domains. Phosphorylated on tyrosine residues by HCK upon IL6 signaling.

In terms of biological role, adapter protein that plays a role in intracellular signaling cascades triggered by activated receptor-type kinases. Plays a role in FGFR1 signaling. Probably involved in signaling by the epidermal growth factor receptor (EGFR) and the insulin receptor (INSR). Involved in the MET/HGF-signaling pathway. This Bos taurus (Bovine) protein is GRB2-associated-binding protein 1 (GAB1).